Here is a 315-residue protein sequence, read N- to C-terminus: Ribosomal RNA small subunit methyltransferase H (315 aa).

Residues 37–39 (GGH), D57, D105, and Q112 contribute to the S-adenosyl-L-methionine site.

It belongs to the methyltransferase superfamily. RsmH family.

The protein resides in the cytoplasm. It catalyses the reaction cytidine(1402) in 16S rRNA + S-adenosyl-L-methionine = N(4)-methylcytidine(1402) in 16S rRNA + S-adenosyl-L-homocysteine + H(+). Functionally, specifically methylates the N4 position of cytidine in position 1402 (C1402) of 16S rRNA. The polypeptide is Ribosomal RNA small subunit methyltransferase H (Nitrosococcus oceani (strain ATCC 19707 / BCRC 17464 / JCM 30415 / NCIMB 11848 / C-107)).